Reading from the N-terminus, the 894-residue chain is Microsomal triglyceride transfer protein large subunit (894 aa).

An N-terminal signal peptide occupies residues 1-21 (MILLAVLFLCFFSSYSASVKG). The Vitellogenin domain occupies 28-658 (LNNERLYKLT…IFQYIGKAEL (631 aa)). The cysteines at positions 174 and 194 are disulfide-linked.

Interacts with PRAP1. As to quaternary structure, heterodimer; heterodimerizes with the protein disulfide isomerase (P4HB/PDI). Interacts with APOB. In terms of assembly, heterodimer; heterodimerizes with the protein disulfide isomerase (P4HB/PDI). In terms of processing, cleaved by signal peptidase between residues Gln-33 and Asn-34. As to expression, mainly expressed in the intestine and the liver, and at lower levels in white and brown fat cells. Expressed in heart. Ubiquitous, and is the major isoform in hematopoietic cells and adipocytes.

The protein localises to the endoplasmic reticulum. It is found in the golgi apparatus. It carries out the reaction a 1,2-diacyl-sn-glycero-3-phosphocholine(in) = a 1,2-diacyl-sn-glycero-3-phosphocholine(out). The catalysed reaction is a 1,2-diacyl-sn-glycero-3-phosphoethanolamine(in) = a 1,2-diacyl-sn-glycero-3-phosphoethanolamine(out). It catalyses the reaction a cholesterol ester(in) = a cholesterol ester(out). The enzyme catalyses a triacyl-sn-glycerol(in) = a triacyl-sn-glycerol(out). Functionally, catalyzes the transport of triglyceride, cholesteryl ester, and phospholipid between phospholipid surfaces. Required for the assembly and secretion of plasma lipoproteins that contain apolipoprotein B. May be involved in regulating cholesteryl ester biosynthesis in cells that produce lipoproteins. In terms of biological role, critical for the development of natural killer T (NKT) cells. Required for the assembly and secretion of plasma lipoproteins that contain apolipoprotein B. In Mus musculus (Mouse), this protein is Microsomal triglyceride transfer protein large subunit (Mttp).